The following is a 230-amino-acid chain: Sugar fermentation stimulation protein homolog (230 aa).

This sequence belongs to the SfsA family.

The polypeptide is Sugar fermentation stimulation protein homolog (Ruegeria pomeroyi (strain ATCC 700808 / DSM 15171 / DSS-3) (Silicibacter pomeroyi)).